Consider the following 216-residue polypeptide: uncharacterized protein (216 aa).

One can recognise an HTH cro/C1-type domain in the interval 8 to 63 (LKTLMTSVHINASELARRTGIAQPIIHRLSTGQNTNPKLATIKPIARYFMVNISQL). The H-T-H motif DNA-binding region spans 19 to 38 (ASELARRTGIAQPIIHRLST).

This is an uncharacterized protein from Coxiella burnetii (strain RSA 493 / Nine Mile phase I).